The following is a 355-amino-acid chain: tRNA-specific 2-thiouridylase MnmA 1 (355 aa).

6-13 (LLSGGVDS) provides a ligand contact to ATP. An interaction with target base in tRNA region spans residues 92 to 94 (NPD). Cys-97 acts as the Nucleophile in catalysis. A disulfide bridge connects residues Cys-97 and Cys-192. Gly-120 serves as a coordination point for ATP. The interval 142–144 (KDQ) is interaction with tRNA. The active-site Cysteine persulfide intermediate is Cys-192.

The protein belongs to the MnmA/TRMU family.

Its subcellular location is the cytoplasm. The catalysed reaction is S-sulfanyl-L-cysteinyl-[protein] + uridine(34) in tRNA + AH2 + ATP = 2-thiouridine(34) in tRNA + L-cysteinyl-[protein] + A + AMP + diphosphate + H(+). In terms of biological role, catalyzes the 2-thiolation of uridine at the wobble position (U34) of tRNA, leading to the formation of s(2)U34. This chain is tRNA-specific 2-thiouridylase MnmA 1, found in Bacteroides thetaiotaomicron (strain ATCC 29148 / DSM 2079 / JCM 5827 / CCUG 10774 / NCTC 10582 / VPI-5482 / E50).